Here is a 637-residue protein sequence, read N- to C-terminus: tRNA uridine 5-carboxymethylaminomethyl modification enzyme MnmG (637 aa).

18-23 serves as a coordination point for FAD; that stretch reads GAGHAG. NAD(+) is bound at residue 282-296; the sequence is GPRYCPSIEDKIVRF.

It belongs to the MnmG family. Homodimer. Heterotetramer of two MnmE and two MnmG subunits. Requires FAD as cofactor.

The protein localises to the cytoplasm. Its function is as follows. NAD-binding protein involved in the addition of a carboxymethylaminomethyl (cmnm) group at the wobble position (U34) of certain tRNAs, forming tRNA-cmnm(5)s(2)U34. In Pediococcus pentosaceus (strain ATCC 25745 / CCUG 21536 / LMG 10740 / 183-1w), this protein is tRNA uridine 5-carboxymethylaminomethyl modification enzyme MnmG.